We begin with the raw amino-acid sequence, 147 residues long: Ribonuclease H (147 aa).

Positions methionine 1–alanine 142 constitute an RNase H type-1 domain. 4 residues coordinate Mg(2+): aspartate 9, glutamate 47, aspartate 69, and aspartate 134.

Belongs to the RNase H family. Monomer. Mg(2+) serves as cofactor.

The protein resides in the cytoplasm. It carries out the reaction Endonucleolytic cleavage to 5'-phosphomonoester.. Functionally, endonuclease that specifically degrades the RNA of RNA-DNA hybrids. The chain is Ribonuclease H from Symbiobacterium thermophilum (strain DSM 24528 / JCM 14929 / IAM 14863 / T).